Consider the following 137-residue polypeptide: MTLNLRVLSPNRVIWDSEVKEIILSTNSGQIGVLPNHASLVAAVDIGVMKIRLNGQWSTMAMMGGFAKIDSDRITILVNNAERDVDIDPREAQENFRIAKADLARAEGKRQAIEADLALKRARTRLEAINASPPVSN.

It belongs to the ATPase epsilon chain family. F-type ATPases have 2 components, CF(1) - the catalytic core - and CF(0) - the membrane proton channel. CF(1) has five subunits: alpha(3), beta(3), gamma(1), delta(1), epsilon(1). CF(0) has three main subunits: a, b and c.

It localises to the plastid. It is found in the chloroplast thylakoid membrane. Its function is as follows. Produces ATP from ADP in the presence of a proton gradient across the membrane. This chain is ATP synthase epsilon chain, chloroplastic, found in Pinus thunbergii (Japanese black pine).